The chain runs to 399 residues: MNIHEHQAKAVLKSFGAPVAEGVAIFSADEAAAAADQLPGPLWVVKSQIHAGGRGKGKFKELGSDAKGGVRLAFSKEDVVKNAKEMLGNTLVTHQTGPEGKRVNRLYIEDGADIATELYCSLLVNRETGQVAFVVSTEGGMDIEEVAAETPEKIQTIDIDPSTGVTDASAAAVCDALKLEGQAREDMMGLAKILYTAFCEKDMSMLEINPLIVMDNGHVRVLDAKVSFDGNALFRHPDIMELRDTTEEDEKEIEASKYDLAYVALDGDIGCMVNGAGLAMATMDIIKLYGAEPANFLDVGGGATTEKVTAAFKIITADPNVKGILVNIFGGIMRCDVIAEGVVTAVKDVGLQVPLVVRLEGTNVAKGKQIINESGLNVIAADDLDDAAQKIVAAVKEAN.

The 246-residue stretch at 9 to 254 (KAVLKSFGAP…TTEEDEKEIE (246 aa)) folds into the ATP-grasp domain. ATP is bound by residues lysine 46, 53–55 (GRG), glutamate 109, alanine 112, and glutamate 117. Residues asparagine 209 and aspartate 223 each coordinate Mg(2+). Substrate contacts are provided by residues asparagine 274 and 331 to 333 (GIM).

Belongs to the succinate/malate CoA ligase beta subunit family. Heterotetramer of two alpha and two beta subunits. Mg(2+) is required as a cofactor.

The catalysed reaction is succinate + ATP + CoA = succinyl-CoA + ADP + phosphate. The enzyme catalyses GTP + succinate + CoA = succinyl-CoA + GDP + phosphate. It participates in carbohydrate metabolism; tricarboxylic acid cycle; succinate from succinyl-CoA (ligase route): step 1/1. Its function is as follows. Succinyl-CoA synthetase functions in the citric acid cycle (TCA), coupling the hydrolysis of succinyl-CoA to the synthesis of either ATP or GTP and thus represents the only step of substrate-level phosphorylation in the TCA. The beta subunit provides nucleotide specificity of the enzyme and binds the substrate succinate, while the binding sites for coenzyme A and phosphate are found in the alpha subunit. This is Succinate--CoA ligase [ADP-forming] subunit beta from Maricaulis maris (strain MCS10) (Caulobacter maris).